The sequence spans 370 residues: Vasopressin V2 receptor (370 aa).

The span at 1–21 (MFMASTTSAVPWHLSQPTPAG) shows a compositional bias: polar residues. A disordered region spans residues 1–26 (MFMASTTSAVPWHLSQPTPAGNGSEG). Residues 1–38 (MFMASTTSAVPWHLSQPTPAGNGSEGELLTARDPLLAQ) are Extracellular-facing. An N-linked (GlcNAc...) asparagine glycan is attached at asparagine 22. Residues 39–63 (AELALLSTVFVAVALSNGLVLGALV) form a helical membrane-spanning segment. Residues 64–77 (RRGRRGRWAPMHVF) lie on the Cytoplasmic side of the membrane. A helical transmembrane segment spans residues 78 to 98 (IGHLCLADLAVALFQVLPQLA). The Extracellular portion of the chain corresponds to 99 to 113 (WDATDRFRGPDALCR). The chain crosses the membrane as a helical span at residues 114-135 (AVKYLQMVGMYASSYMILAMTL). At 136–159 (DRHRAICRPMLAHRHGGGTHWNRP) the chain is on the cytoplasmic side. Residues 160-180 (VLLAWAFSLLFSLPQLFIFAQ) form a helical membrane-spanning segment. At 181 to 199 (RDVDGSGVLDCWARFAEPW) the chain is on the extracellular side. The helical transmembrane segment at 200 to 219 (GLRAYVTWIALMVFVAPALG) threads the bilayer. Topologically, residues 220–270 (IAACQVLIFREIHASLGPGPVPRAGGPRRGCRPGSPAEGARVSAAVAKTVK) are cytoplasmic. A helical membrane pass occupies residues 271–292 (MTLVIVIVYVLCWAPFFLVQLW). The Extracellular portion of the chain corresponds to 293 to 307 (AAWDPEAPREGPPFV). A helical membrane pass occupies residues 308–327 (LLMLLASLNSCTNPWIYASF). The Cytoplasmic portion of the chain corresponds to 328 to 370 (SSSISSELRSLLCCTWRRAPPSPGPQEESCATASSFLAKDTPS). 2 S-palmitoyl cysteine lipidation sites follow: cysteine 340 and cysteine 341. The interval 347-370 (PPSPGPQEESCATASSFLAKDTPS) is disordered.

This sequence belongs to the G-protein coupled receptor 1 family. Vasopressin/oxytocin receptor subfamily. As to quaternary structure, interacts with ARRDC4. Identified in a complex containing at least ARRDC4, V2R and HGS. Interacts with TMEM147.

The protein localises to the cell membrane. In terms of biological role, receptor for arginine vasopressin. The activity of this receptor is mediated by G proteins which activate adenylate cyclase. Involved in renal water reabsorption. The chain is Vasopressin V2 receptor (AVPR2) from Bos taurus (Bovine).